A 135-amino-acid polypeptide reads, in one-letter code: uncharacterized protein (135 aa).

3 helical membrane passes run 12 to 32 (IPILLLVLYIALGVFIQYNGI), 68 to 88 (SMIGGMPGYLPLYAYLCAKFC), and 98 to 118 (GILYFSVVLFIMTSVIWFYLF).

It is found in the cell membrane. This is an uncharacterized protein from Methanocaldococcus jannaschii (strain ATCC 43067 / DSM 2661 / JAL-1 / JCM 10045 / NBRC 100440) (Methanococcus jannaschii).